The sequence spans 41 residues: Large ribosomal subunit protein bL36 (41 aa).

Belongs to the bacterial ribosomal protein bL36 family.

The sequence is that of Large ribosomal subunit protein bL36 from Ruegeria pomeroyi (strain ATCC 700808 / DSM 15171 / DSS-3) (Silicibacter pomeroyi).